The sequence spans 1323 residues: Clustered mitochondria protein homolog (1323 aa).

A TPR 1 repeat occupies 103–141 (KEKPYNLAAIYDHLNKFREVIGLHFLDKYSSEVGVLSGV). The disordered stretch occupies residues 149–186 (LQDVKETEPETQDDKDKETDETKSTKEDSNQTEEKKSE). Positions 150–186 (QDVKETEPETQDDKDKETDETKSTKEDSNQTEEKKSE) are enriched in basic and acidic residues. The Clu domain occupies 351–608 (FANQPDASRS…RATPLDIEFI (258 aa)). A TPR 2 repeat occupies 530–563 (CYGLSTDGSKIFSDSSFENVLKPIAEAFHLKPHP). Over residues 764–801 (NEEEISKRKEESEKKATEGKDQDKEEEKANDNEKNKED) the composition is skewed to basic and acidic residues. The interval 764 to 808 (NEEEISKRKEESEKKATEGKDQDKEEEKANDNEKNKEDDKEEVSN) is disordered. TPR repeat units follow at residues 1042-1076 (LSVY…KSEA), 1099-1132 (ITAY…WTLV), 1141-1174 (VNTY…STKL), and 1183-1216 (GMLR…FTKF). Residues 1250–1323 (KALAQQASAS…KKSNNKKSKK (74 aa)) are disordered. A compositionally biased stretch (basic residues) spans 1308–1323 (PKKQLKKKSNNKKSKK).

This sequence belongs to the CLU family. May associate with the eukaryotic translation initiation factor 3 (eIF-3) complex.

The protein localises to the cytoplasm. MRNA-binding protein involved in proper cytoplasmic distribution of mitochondria. The chain is Clustered mitochondria protein homolog from Debaryomyces hansenii (strain ATCC 36239 / CBS 767 / BCRC 21394 / JCM 1990 / NBRC 0083 / IGC 2968) (Yeast).